We begin with the raw amino-acid sequence, 246 residues long: Probable transcriptional regulatory protein TM1040_1893 (246 aa).

Positions 1–21 are disordered; sequence MAGHSKWANIQHRKGRQDAAR.

It belongs to the TACO1 family.

It is found in the cytoplasm. The protein is Probable transcriptional regulatory protein TM1040_1893 of Ruegeria sp. (strain TM1040) (Silicibacter sp.).